Here is a 454-residue protein sequence, read N- to C-terminus: Probable N-octanoylanthranilate hydrolase AqdA2 (454 aa).

Ser185 acts as the Acyl-ester intermediate in catalysis. Active-site charge relay system residues include Glu306 and His379.

Belongs to the type-B carboxylesterase/lipase family.

The enzyme catalyses N-octanoylanthranilate + H2O = anthranilate + octanoate + H(+). Functionally, involved in the degradation of the Pseudomonas aeruginosa quorum sensing signal molecules HHQ (2-heptyl-4-quinolone) and PQS (2-heptyl-3-hydroxy-4-quinolone) to anthranilic acid. Probably catalyzes the hydrolysis of N-octanoylanthranilic acid to anthranilic acid. This is Probable N-octanoylanthranilate hydrolase AqdA2 from Rhodococcus erythropolis (Arthrobacter picolinophilus).